Here is a 157-residue protein sequence, read N- to C-terminus: 2-C-methyl-D-erythritol 2,4-cyclodiphosphate synthase (157 aa).

Positions 8 and 10 each coordinate a divalent metal cation. 4-CDP-2-C-methyl-D-erythritol 2-phosphate is bound by residues 8–10 (DVH) and 34–35 (HS). Residue His42 participates in a divalent metal cation binding. 4-CDP-2-C-methyl-D-erythritol 2-phosphate-binding positions include 56-58 (DIG), 61-65 (FPDTD), 100-106 (AQAPKMA), 132-135 (TTEE), Phe139, and Arg142.

Belongs to the IspF family. In terms of assembly, homotrimer. A divalent metal cation is required as a cofactor.

It catalyses the reaction 4-CDP-2-C-methyl-D-erythritol 2-phosphate = 2-C-methyl-D-erythritol 2,4-cyclic diphosphate + CMP. The protein operates within isoprenoid biosynthesis; isopentenyl diphosphate biosynthesis via DXP pathway; isopentenyl diphosphate from 1-deoxy-D-xylulose 5-phosphate: step 4/6. Its function is as follows. Involved in the biosynthesis of isopentenyl diphosphate (IPP) and dimethylallyl diphosphate (DMAPP), two major building blocks of isoprenoid compounds. Catalyzes the conversion of 4-diphosphocytidyl-2-C-methyl-D-erythritol 2-phosphate (CDP-ME2P) to 2-C-methyl-D-erythritol 2,4-cyclodiphosphate (ME-CPP) with a corresponding release of cytidine 5-monophosphate (CMP). The sequence is that of 2-C-methyl-D-erythritol 2,4-cyclodiphosphate synthase from Pseudomonas entomophila (strain L48).